The following is a 227-amino-acid chain: Large ribosomal subunit protein uL3 (227 aa).

This sequence belongs to the universal ribosomal protein uL3 family. Part of the 50S ribosomal subunit. Forms a cluster with proteins L14 and L19.

Its function is as follows. One of the primary rRNA binding proteins, it binds directly near the 3'-end of the 23S rRNA, where it nucleates assembly of the 50S subunit. The sequence is that of Large ribosomal subunit protein uL3 from Persephonella marina (strain DSM 14350 / EX-H1).